A 361-amino-acid polypeptide reads, in one-letter code: Phospho-N-acetylmuramoyl-pentapeptide-transferase (361 aa).

The next 10 membrane-spanning stretches (helical) occupy residues 27-47 (GAIVTAVLFVFLFGPGIISTL), 72-92 (TPTMGGLMIFSGLIVATLLWA), 94-114 (LSNLYVWVVLFVTTGFGLIGF), 133-153 (ARLAIEALIAGIAVVLMINAG), 169-189 (LLLDLGWFFVVFGAFVIVAAG), 200-220 (GLAIVPVMIAAASFGMISYLS), 237-257 (VGELAVICGAIIGAGLGFLWF), 264-284 (IFMGDTGSLALGGLLGSIAVA), 289-309 (IVLAVIGGLFVLEAVSVIVQV), and 338-358 (QVVIRFWIIAVVLALLGLATL).

This sequence belongs to the glycosyltransferase 4 family. MraY subfamily. Mg(2+) is required as a cofactor.

The protein resides in the cell inner membrane. The enzyme catalyses UDP-N-acetyl-alpha-D-muramoyl-L-alanyl-gamma-D-glutamyl-meso-2,6-diaminopimeloyl-D-alanyl-D-alanine + di-trans,octa-cis-undecaprenyl phosphate = di-trans,octa-cis-undecaprenyl diphospho-N-acetyl-alpha-D-muramoyl-L-alanyl-D-glutamyl-meso-2,6-diaminopimeloyl-D-alanyl-D-alanine + UMP. It functions in the pathway cell wall biogenesis; peptidoglycan biosynthesis. Functionally, catalyzes the initial step of the lipid cycle reactions in the biosynthesis of the cell wall peptidoglycan: transfers peptidoglycan precursor phospho-MurNAc-pentapeptide from UDP-MurNAc-pentapeptide onto the lipid carrier undecaprenyl phosphate, yielding undecaprenyl-pyrophosphoryl-MurNAc-pentapeptide, known as lipid I. The protein is Phospho-N-acetylmuramoyl-pentapeptide-transferase of Azorhizobium caulinodans (strain ATCC 43989 / DSM 5975 / JCM 20966 / LMG 6465 / NBRC 14845 / NCIMB 13405 / ORS 571).